We begin with the raw amino-acid sequence, 324 residues long: o-succinylbenzoate synthase (324 aa).

K135 (proton donor) is an active-site residue. The Mg(2+) site is built by D163, E192, and D215. K237 functions as the Proton acceptor in the catalytic mechanism.

The protein belongs to the mandelate racemase/muconate lactonizing enzyme family. MenC type 1 subfamily. A divalent metal cation is required as a cofactor.

The catalysed reaction is (1R,6R)-6-hydroxy-2-succinyl-cyclohexa-2,4-diene-1-carboxylate = 2-succinylbenzoate + H2O. The protein operates within quinol/quinone metabolism; 1,4-dihydroxy-2-naphthoate biosynthesis; 1,4-dihydroxy-2-naphthoate from chorismate: step 4/7. It functions in the pathway quinol/quinone metabolism; menaquinone biosynthesis. Its function is as follows. Converts 2-succinyl-6-hydroxy-2,4-cyclohexadiene-1-carboxylate (SHCHC) to 2-succinylbenzoate (OSB). The sequence is that of o-succinylbenzoate synthase from Aliivibrio salmonicida (strain LFI1238) (Vibrio salmonicida (strain LFI1238)).